A 179-amino-acid polypeptide reads, in one-letter code: Segregation and condensation protein B (179 aa).

Belongs to the ScpB family. In terms of assembly, homodimer. Homodimerization may be required to stabilize the binding of ScpA to the Smc head domains. Component of a cohesin-like complex composed of ScpA, ScpB and the Smc homodimer, in which ScpA and ScpB bind to the head domain of Smc. The presence of the three proteins is required for the association of the complex with DNA.

The protein resides in the cytoplasm. Its function is as follows. Participates in chromosomal partition during cell division. May act via the formation of a condensin-like complex containing Smc and ScpA that pull DNA away from mid-cell into both cell halves. This chain is Segregation and condensation protein B, found in Streptococcus equi subsp. equi (strain 4047).